The following is a 116-amino-acid chain: Putative pterin-4-alpha-carbinolamine dehydratase (116 aa).

It belongs to the pterin-4-alpha-carbinolamine dehydratase family.

It catalyses the reaction (4aS,6R)-4a-hydroxy-L-erythro-5,6,7,8-tetrahydrobiopterin = (6R)-L-erythro-6,7-dihydrobiopterin + H2O. The polypeptide is Putative pterin-4-alpha-carbinolamine dehydratase (Microcystis aeruginosa (strain NIES-843 / IAM M-2473)).